We begin with the raw amino-acid sequence, 1042 residues long: SWI/SNF-related matrix-associated actin-dependent regulator of chromatin subfamily A member 1 (1042 aa).

The interval glutamate 25–glutamate 82 is disordered. Over residues glutamate 36–threonine 50 the composition is skewed to low complexity. Composition is skewed to basic and acidic residues over residues glutamate 51–asparagine 60 and proline 73–glutamate 82. Residues serine 116 and serine 119 each carry the phosphoserine modification. Residues isoleucine 195–aspartate 360 enclose the Helicase ATP-binding domain. ATP is bound at residue aspartate 208–threonine 215. Positions aspartate 311–histidine 314 match the DEAH box motif. The 152-residue stretch at valine 490–isoleucine 641 folds into the Helicase C-terminal domain. Residues lysine 650, lysine 716, and lysine 738 each participate in a glycyl lysine isopeptide (Lys-Gly) (interchain with G-Cter in SUMO2) cross-link. A disordered region spans residues glutamate 819–threonine 849. The segment covering proline 828–lysine 837 has biased composition (basic and acidic residues). The SANT 1 domain maps to glutamine 843–asparagine 895. A Phosphotyrosine modification is found at tyrosine 942. The 65-residue stretch at lysine 946 to leucine 1010 folds into the SANT 2 domain.

The protein belongs to the SNF2/RAD54 helicase family. ISWI subfamily. In terms of assembly, may form homodimers. Component of the ACF-1 ISWI chromatin remodeling complex at least composed of SMARCA1 and BAZ1A, which regulates the spacing of histone octamers on the DNA template to facilitate access to DNA. Within the complex interacts with BAZ1A; the interaction is direct. Component of the WICH-1 ISWI chromatin remodeling complex at least composed of SMARCA1 and BAZ1B/WSTF. Within the complex interacts with BAZ1B/WSTF. Component of the NoRC-1 ISWI chromatin remodeling complex at least composed of SMARCA1 and BAZ2A/TIP5. Within the complex interacts with BAZ2A/TIP5. Component of the BRF-1 ISWI chromatin remodeling complex at least composed of SMARCA1 and BAZ2B. Within the complex interacts with BAZ2B. Component of the NURF-1 ISWI chromatin remodeling complex (also called the nucleosome-remodeling factor (NURF) complex) at least composed of SMARCA1, BPTF, RBBP4 and RBBP7. Within the complex interacts with BPTF. Within the complex interacts with RBBP4 and RBBP7. Component of the CERF-1 ISWI chromatin remodeling complex (also called the CECR2-containing-remodeling factor (CERF) complex) at least composed of CECR2 and SMARCA1. LUZP1 is detected as part of the CERF-1 complex in embryonic stem cells where it is involved in complex stabilization but is not detected in the complex in the testis. Component of the RSF-1 ISWI chromatin remodeling complex at least composed of SMARCA1 and RSF1. Within the complex interacts with RSF1. Interacts with PRLR. Interacts with ERCC6. May form homodimers. Component of the BPFT-SMARCA1 complex at least composed of SMARCA1, BPFT, RBBP4 and RBBP7; the complex is catalytically inactive and does not remodel chromatin. Within the complex interacts with BPTF, RBBP4 and RBBP7. Component of the BAZ1A-1-SMARCA1 complex at least composed of SMARCA1 and BAZ1A; the complex is catalytically inactive and does not remodel chromatin. Component of the BAZ1B-1-SMARCA1 complex at least composed of SMARCA1 and BAZ1B; the complex is catalytically inactive and does not remodel chromatin. As to expression, expressed in lung, breast, kidney, ovary, skeletal muscle and brain. Mainly expressed in non-neuronal tissues such as lung, breast, kidney, and ovary.

It is found in the nucleus. Its subcellular location is the chromosome. The catalysed reaction is ATP + H2O = ADP + phosphate + H(+). ATPase that possesses intrinsic ATP-dependent chromatin-remodeling activity. ATPase activity is substrate-dependent, and is increased when nucleosomes are the substrate, but is also catalytically active when DNA alone is the substrate. Catalytic subunit of ISWI chromatin-remodeling complexes, which form ordered nucleosome arrays on chromatin and facilitate access to DNA during DNA-templated processes such as DNA replication, transcription, and repair. Within the ISWI chromatin-remodeling complexes, slides edge- and center-positioned histone octamers away from their original location on the DNA template. Catalytic activity and histone octamer sliding propensity is regulated and determined by components of the ISWI chromatin-remodeling complexes. The BAZ1A-, BAZ1B-, BAZ2A- and BAZ2B-containing ISWI chromatin-remodeling complexes regulate the spacing of nucleosomes along the chromatin and have the ability to slide mononucleosomes to the center of a DNA template. The CECR2- and RSF1-containing ISWI chromatin-remodeling complexes do not have the ability to slide mononucleosomes to the center of a DNA template. Within the NURF-1 and CERF-1 ISWI chromatin remodeling complexes, nucleosomes are the preferred substrate for its ATPase activity. Within the NURF-1 ISWI chromatin-remodeling complex, binds to the promoters of En1 and En2 to positively regulate their expression and promote brain development. May promote neurite outgrowth. May be involved in the development of luteal cells. Facilitates nucleosome assembly during DNA replication, ensuring replication fork progression and genomic stability by preventing replication stress and nascent DNA gaps. Its function is as follows. Catalytically inactive when either DNA or nucleosomes are the substrate and does not possess chromatin-remodeling activity. Acts as a negative regulator of chromatin remodelers by generating inactive complexes. This Homo sapiens (Human) protein is SWI/SNF-related matrix-associated actin-dependent regulator of chromatin subfamily A member 1.